The following is a 615-amino-acid chain: Nuclear receptor subfamily 1 group D member 1 (615 aa).

Residues 1-12 (MTTLDSNNNTGG) show a composition bias toward polar residues. The required for phosphorylation by CSNK1E and cytoplasmic localization stretch occupies residues 1–70 (MTTLDSNNNT…TQDPARSFGT (70 aa)). Residues 1–120 (MTTLDSNNNT…SSRVSPSKGT (120 aa)) are disordered. Positions 1–129 (MTTLDSNNNT…TSNITKLNGM (129 aa)) are modulating. Residues 14 to 34 (ITYIGSSGSSPSRTSPESLYS) show a composition bias toward low complexity. Residues 35-48 (DSSNGSFQSLTQGC) show a composition bias toward polar residues. The tract at residues 49-285 (PTYFPPSPTG…PPRSPSPEPT (237 aa)) is crucial for activation of GJA1. 2 positions are modified to phosphoserine; by GSK3-beta: Ser55 and Ser59. Residues 72-103 (PPSLSDDSSPSSASSSSSSSSSSFYNGSPPGS) are compositionally biased toward low complexity. A DNA-binding region (nuclear receptor) is located at residues 130–206 (VLLCKVCGDV…VGMSRDAVRF (77 aa)). 2 NR C4-type zinc fingers span residues 133 to 153 (CKVCGDVASGFHYGVHACEGC) and 170 to 194 (CLKNENCSIVRINRNRCQQCRFKKC). An N6-acetyllysine; by KAT5 mark is found at Lys192 and Lys193. Disordered stretches follow at residues 235 to 287 (LCPL…PTVE), 312 to 337 (PGNFNANHASGSPPATTPQCWESQGC), and 357 to 385 (NGLRQGPSSYPPTWPSGPAHHSCHQPNSN). The segment covering 253 to 262 (PSPPPAPAPT) has biased composition (pro residues). Thr275 carries the phosphothreonine; by CDK1 modification. Residues 285-615 (TVEDVISQVA…KLLSFRVDAQ (331 aa)) enclose the NR LBD domain. N6-acetyllysine is present on Lys401. Residue Cys419 participates in heme binding. An N6-acetyllysine modification is found at Lys592. His603 is a heme binding site.

The protein belongs to the nuclear hormone receptor family. NR1 subfamily. As to quaternary structure, binds DNA as a monomer or a homodimer. Interacts with C1D, NR2E3, SP1 and ZNHIT1. Interacts with OPHN1 (via C-terminus). Interacts with PER2; the interaction associates PER2 to BMAL1 promoter region. Interacts with CRY1. Interacts with CCAR2. Interacts with SIAH2. Interacts with FBXW7 and CDK1. Interacts with HUWE1. Interacts with NR0B2. Interacts with NFIL3. Interacts (via domain NR LBD) with HSP90AA1 and HSP90AB1. Ubiquitinated, leading to its proteasomal degradation. Ubiquitinated by the SCF(FBXW7) complex when phosphorylated by CDK1 leading to its proteasomal degradation. Ubiquitinated by SIAH2; leading to its proteasomal degradation. Rapidly ubiquitinated in response to inflammatory triggers and sumoylation is a prerequisite to its ubiquitination. Post-translationally, sumoylated by UBE2I, desumoylated by SENP1, and sumoylation is a prerequisite to its ubiquitination. In terms of processing, phosphorylated by CSNK1E; phosphorylation enhances its cytoplasmic localization. Undergoes lysosome-mediated degradation in a time-dependent manner in the liver.

It localises to the nucleus. It is found in the cytoplasm. Its subcellular location is the cell projection. The protein localises to the dendrite. The protein resides in the dendritic spine. In terms of biological role, transcriptional repressor which coordinates circadian rhythm and metabolic pathways in a heme-dependent manner. Integral component of the complex transcription machinery that governs circadian rhythmicity and forms a critical negative limb of the circadian clock by directly repressing the expression of core clock components BMAL1, CLOCK and CRY1. Also regulates genes involved in metabolic functions, including lipid and bile acid metabolism, adipogenesis, gluconeogenesis and the macrophage inflammatory response. Acts as a receptor for heme which stimulates its interaction with the NCOR1/HDAC3 corepressor complex, enhancing transcriptional repression. Recognizes two classes of DNA response elements within the promoter of its target genes and can bind to DNA as either monomers or homodimers, depending on the nature of the response element. Binds as a monomer to a response element composed of the consensus half-site motif 5'-[A/G]GGTCA-3' preceded by an A/T-rich 5' sequence (RevRE), or as a homodimer to a direct repeat of the core motif spaced by two nucleotides (RevDR-2). Acts as a potent competitive repressor of ROR alpha (RORA) function and regulates the levels of its ligand heme by repressing the expression of PPARGC1A, a potent inducer of heme synthesis. Regulates lipid metabolism by repressing the expression of APOC3 and by influencing the activity of sterol response element binding proteins (SREBPs); represses INSIG2 which interferes with the proteolytic activation of SREBPs which in turn govern the rhythmic expression of enzymes with key functions in sterol and fatty acid synthesis. Regulates gluconeogenesis via repression of G6PC1 and PEPCK and adipocyte differentiation via repression of PPARG. Regulates glucagon release in pancreatic alpha-cells via the AMPK-NAMPT-SIRT1 pathway and the proliferation, glucose-induced insulin secretion and expression of key lipogenic genes in pancreatic-beta cells. Positively regulates bile acid synthesis by increasing hepatic expression of CYP7A1 via repression of NR0B2 and NFIL3 which are negative regulators of CYP7A1. Modulates skeletal muscle oxidative capacity by regulating mitochondrial biogenesis and autophagy; controls mitochondrial biogenesis and respiration by interfering with the STK11-PRKAA1/2-SIRT1-PPARGC1A signaling pathway. Represses the expression of SERPINE1/PAI1, an important modulator of cardiovascular disease and the expression of inflammatory cytokines and chemokines in macrophages. Represses gene expression at a distance in macrophages by inhibiting the transcription of enhancer-derived RNAs (eRNAs). Plays a role in the circadian regulation of body temperature and negatively regulates thermogenic transcriptional programs in brown adipose tissue (BAT); imposes a circadian oscillation in BAT activity, increasing body temperature when awake and depressing thermogenesis during sleep. In concert with NR2E3, regulates transcriptional networks critical for photoreceptor development and function. In addition to its activity as a repressor, can also act as a transcriptional activator. In the ovarian granulosa cells acts as a transcriptional activator of STAR which plays a role in steroid biosynthesis. In collaboration with SP1, activates GJA1 transcription in a heme-independent manner. Represses the transcription of CYP2B10, CYP4A10 and CYP4A14. Represses the transcription of CES2. Represses and regulates the circadian expression of TSHB in a NCOR1-dependent manner. Negatively regulates the protein stability of NR3C1 and influences the time-dependent subcellular distribution of NR3C1, thereby affecting its transcriptional regulatory activity. Plays a critical role in the circadian control of neutrophilic inflammation in the lung; under resting, non-stress conditions, acts as a rhythmic repressor to limit inflammatory activity whereas in the presence of inflammatory triggers undergoes ubiquitin-mediated degradation thereby relieving inhibition of the inflammatory response. Plays a key role in the circadian regulation of microglial activation and neuroinflammation; suppresses microglial activation through the NF-kappaB pathway in the central nervous system. Plays a role in the regulation of the diurnal rhythms of lipid and protein metabolism in the skeletal muscle via transcriptional repression of genes controlling lipid and amino acid metabolism in the muscle. This is Nuclear receptor subfamily 1 group D member 1 (Nr1d1) from Rattus norvegicus (Rat).